We begin with the raw amino-acid sequence, 91 residues long: Small ribosomal subunit protein bS20 (91 aa).

Positions Met1 to Ala23 are disordered.

It belongs to the bacterial ribosomal protein bS20 family.

In terms of biological role, binds directly to 16S ribosomal RNA. The protein is Small ribosomal subunit protein bS20 of Rhizobium rhizogenes (strain K84 / ATCC BAA-868) (Agrobacterium radiobacter).